A 173-amino-acid polypeptide reads, in one-letter code: Adenine phosphoribosyltransferase (173 aa).

This sequence belongs to the purine/pyrimidine phosphoribosyltransferase family. As to quaternary structure, homodimer.

It localises to the cytoplasm. The enzyme catalyses AMP + diphosphate = 5-phospho-alpha-D-ribose 1-diphosphate + adenine. It functions in the pathway purine metabolism; AMP biosynthesis via salvage pathway; AMP from adenine: step 1/1. Its function is as follows. Catalyzes a salvage reaction resulting in the formation of AMP, that is energically less costly than de novo synthesis. The protein is Adenine phosphoribosyltransferase of Petrotoga mobilis (strain DSM 10674 / SJ95).